A 763-amino-acid polypeptide reads, in one-letter code: MHTGGETSACKPSSVRLAPSFSFHAAGLQMAAQMPHSHQYSDRRQPNISDQQVSALSYSDQIQQPLTNQVMPDIVMLQRRMPQTFRDPATAPLRKLSVDLIKTYKHINEVYYAKKKRRHQQGQGDDSSHKKERKVYNDGYDDDNYDYIVKNGEKWMDRYEIDSLIGKGSFGQVVKAYDRVEQEWVAIKIIKNKKAFLNQAQIEVRLLELMNKHDTEMKYYIVHLKRHFMFRNHLCLVFEMLSYNLYDLLRNTNFRGVSLNLTRKFAQQMCTALLFLATPELSIIHCDLKPENILLCNPKRSAIKIVDFGSSCQLGQRIYQYIQSRFYRSPEVLLGMPYDLAIDMWSLGCILVEMHTGEPLFSGANEVDQMNKIVEVLGIPPAHILDQAPKARKFFEKLPDGTWSLKKTKDGKREYKPPGTRKLHNILGVETGGPGGRRAGESGHTVADYLKFKDLILRMLDYDPKTRIQPYYALQHSFFKKTADEGTNTSNSVSTSPAMEQSQSSGTTSSTSSSSGGSSGTSNSGRARSDPTHQHRHSGGHFAAAVQAMDCETHSPQVRQQFPAPLGWSGTEAPTQVTVETHPVQETTFHVAPQQNALHHHHGNSSHHHHHHHHHHHHHGQQALGNRTRPRVYNSPTNSSSTQDSMEVGHSHHSMTSLSSSTTSSSTSSSSTGNQGNQAYQNRPVAANTLDFGQNGAMDVNLTVYSNPRQETGIAGHPTYQFSANTGPAHYMTEGHLTMRQGADREESPMTGVCVQQSPVASS.

Serine 14 bears the Phosphoserine mark. The disordered stretch occupies residues 33–56; it reads QMPHSHQYSDRRQPNISDQQVSAL. Residues 46–56 show a composition bias toward polar residues; that stretch reads PNISDQQVSAL. Tyrosine 111 bears the Phosphotyrosine; by autocatalysis mark. Residues 115 to 136 form a disordered region; it reads KKRRHQQGQGDDSSHKKERKVY. Positions 117-134 match the Bipartite nuclear localization signal motif; the sequence is RRHQQGQGDDSSHKKERK. Tyrosine 140 is modified (phosphotyrosine; by autocatalysis). Tyrosine 145 carries the post-translational modification Phosphotyrosine. Tyrosine 159 is subject to Phosphotyrosine; by autocatalysis. The Protein kinase domain maps to 159 to 479; that stretch reads YEIDSLIGKG…PYYALQHSFF (321 aa). Residue 165-173 participates in ATP binding; it reads IGKGSFGQV. At tyrosine 177 the chain carries Phosphotyrosine; by autocatalysis. An ATP-binding site is contributed by lysine 188. Tyrosine 219 bears the Phosphotyrosine; by autocatalysis mark. Residue 238–241 coordinates ATP; it reads FEML. Aspartate 287 serves as the catalytic Proton acceptor. Phosphoserine; by autocatalysis is present on serine 310. Tyrosine 319 and tyrosine 321 each carry phosphotyrosine; by autocatalysis. Threonine 402 is subject to Phosphothreonine; by autocatalysis. The disordered stretch occupies residues 408–442; it reads TKDGKREYKPPGTRKLHNILGVETGGPGGRRAGES. A Phosphotyrosine; by autocatalysis modification is found at tyrosine 449. Residues 485 to 501 are compositionally biased toward polar residues; the sequence is EGTNTSNSVSTSPAMEQ. 3 disordered regions span residues 485-540, 596-679, and 744-763; these read EGTN…HSGG, NALH…GNQA, and DREE…VASS. A compositionally biased stretch (low complexity) spans 502 to 525; it reads SQSSGTTSSTSSSSGGSSGTSNSG. A phosphoserine mark is found at serine 529 and serine 538. Residues 595-625 form a histidine-rich domain (HRD) region; that stretch reads QNALHHHHGNSSHHHHHHHHHHHHHGQQALG. Residues 598-620 are compositionally biased toward basic residues; the sequence is LHHHHGNSSHHHHHHHHHHHHHG. Residues 634 to 645 are compositionally biased toward polar residues; it reads NSPTNSSSTQDS. The span at 654–672 shows a compositional bias: low complexity; that stretch reads SMTSLSSSTTSSSTSSSST. A phosphoserine mark is found at serine 748 and serine 758. The span at 754–763 shows a compositional bias: polar residues; it reads CVQQSPVASS.

This sequence belongs to the protein kinase superfamily. CMGC Ser/Thr protein kinase family. MNB/DYRK subfamily. As to quaternary structure, interacts with RAD54L2/ARIP4. Interacts with CRY2. Interacts with RANBP9. Interacts with WDR68. Interacts with SIRT1. In terms of processing, can also autophosphorylate on serine and threonine residues (in vitro). Autophosphorylated on numerous tyrosine residues. In terms of tissue distribution, detected in brain (at protein level). Ubiquitous.

Its subcellular location is the nucleus speckle. The enzyme catalyses L-seryl-[protein] + ATP = O-phospho-L-seryl-[protein] + ADP + H(+). The catalysed reaction is L-threonyl-[protein] + ATP = O-phospho-L-threonyl-[protein] + ADP + H(+). It carries out the reaction L-tyrosyl-[protein] + ATP = O-phospho-L-tyrosyl-[protein] + ADP + H(+). It catalyses the reaction [DNA-directed RNA polymerase] + ATP = phospho-[DNA-directed RNA polymerase] + ADP + H(+). Inhibited by RANBP9. Inhibited by harmine, leucettamine B and leucettine L41. In terms of biological role, dual-specificity kinase which possesses both serine/threonine and tyrosine kinase activities. Exhibits a substrate preference for proline at position P+1 and arginine at position P-3. Plays an important role in double-strand breaks (DSBs) repair following DNA damage. Mechanistically, phosphorylates RNF169 and increases its ability to block accumulation of TP53BP1 at the DSB sites thereby promoting homologous recombination repair (HRR). Also acts as a positive regulator of transcription by acting as a CTD kinase that mediates phosphorylation of the CTD (C-terminal domain) of the large subunit of RNA polymerase II (RNAP II) POLR2A. May play a role in a signaling pathway regulating nuclear functions of cell proliferation. Modulates alternative splicing by phosphorylating the splice factor SRSF6. Has pro-survival function and negatively regulates the apoptotic process. Promotes cell survival upon genotoxic stress through phosphorylation of SIRT1. This in turn inhibits p53/TP53 activity and apoptosis. Phosphorylates SEPTIN4, SEPTIN5 and SF3B1 at 'Thr-434'. This Rattus norvegicus (Rat) protein is Dual specificity tyrosine-phosphorylation-regulated kinase 1A (Dyrk1a).